The sequence spans 236 residues: Potassium/proton antiporter CemA (236 aa).

4 helical membrane passes run 18-38 (YIIS…FLVL), 114-134 (IAHV…LINA), 161-181 (LILF…KILI), and 196-216 (FIFL…KYWI).

This sequence belongs to the CemA family.

It is found in the plastid. The protein localises to the chloroplast inner membrane. The catalysed reaction is K(+)(in) + H(+)(out) = K(+)(out) + H(+)(in). In terms of biological role, contributes to K(+)/H(+) antiport activity by supporting proton efflux to control proton extrusion and homeostasis in chloroplasts in a light-dependent manner to modulate photosynthesis. Prevents excessive induction of non-photochemical quenching (NPQ) under continuous-light conditions. Indirectly promotes efficient inorganic carbon uptake into chloroplasts. This Mesostigma viride (Green alga) protein is Potassium/proton antiporter CemA.